Reading from the N-terminus, the 102-residue chain is Small ribosomal subunit protein uS10 (102 aa).

It belongs to the universal ribosomal protein uS10 family. As to quaternary structure, part of the 30S ribosomal subunit.

Functionally, involved in the binding of tRNA to the ribosomes. This is Small ribosomal subunit protein uS10 from Cereibacter sphaeroides (strain ATCC 17029 / ATH 2.4.9) (Rhodobacter sphaeroides).